The sequence spans 101 residues: Small ribosomal subunit protein eS24 (101 aa).

This sequence belongs to the eukaryotic ribosomal protein eS24 family.

The chain is Small ribosomal subunit protein eS24 from Methanosarcina mazei (strain ATCC BAA-159 / DSM 3647 / Goe1 / Go1 / JCM 11833 / OCM 88) (Methanosarcina frisia).